We begin with the raw amino-acid sequence, 753 residues long: 5-methyltetrahydropteroyltriglutamate--homocysteine methyltransferase (753 aa).

Residues 17–20 (RELK) and K117 each bind 5-methyltetrahydropteroyltri-L-glutamate. Residues 431–433 (IGS) and E484 contribute to the L-homocysteine site. L-methionine is bound by residues 431-433 (IGS) and E484. Residues 515–516 (RC) and W561 each bind 5-methyltetrahydropteroyltri-L-glutamate. Position 599 (D599) interacts with L-homocysteine. D599 contributes to the L-methionine binding site. E605 is a binding site for 5-methyltetrahydropteroyltri-L-glutamate. 3 residues coordinate Zn(2+): H641, C643, and E665. The active-site Proton donor is the H694. Residue C726 coordinates Zn(2+).

It belongs to the vitamin-B12 independent methionine synthase family. Zn(2+) serves as cofactor.

The catalysed reaction is 5-methyltetrahydropteroyltri-L-glutamate + L-homocysteine = tetrahydropteroyltri-L-glutamate + L-methionine. The protein operates within amino-acid biosynthesis; L-methionine biosynthesis via de novo pathway; L-methionine from L-homocysteine (MetE route): step 1/1. In terms of biological role, catalyzes the transfer of a methyl group from 5-methyltetrahydrofolate to homocysteine resulting in methionine formation. In Escherichia coli O7:K1 (strain IAI39 / ExPEC), this protein is 5-methyltetrahydropteroyltriglutamate--homocysteine methyltransferase.